We begin with the raw amino-acid sequence, 71 residues long: MGRVRPRYIKSLGEKLLEMYPDKFTDNFEENKKAVAELADIPSKTVRNKVAGYITRLVKRRKAQEKAESAA.

This sequence belongs to the eukaryotic ribosomal protein eS17 family.

In Pyrobaculum aerophilum (strain ATCC 51768 / DSM 7523 / JCM 9630 / CIP 104966 / NBRC 100827 / IM2), this protein is Small ribosomal subunit protein eS17.